The following is a 229-amino-acid chain: Small ribosomal subunit protein uS3 (229 aa).

The 71-residue stretch at 39-109 (MRKYIKEQLM…QVNIDIVEIR (71 aa)) folds into the KH type-2 domain. The disordered stretch occupies residues 210–229 (VVSQQNSRPSGPRGPRRPRA).

It belongs to the universal ribosomal protein uS3 family. Part of the 30S ribosomal subunit. Forms a tight complex with proteins S10 and S14.

In terms of biological role, binds the lower part of the 30S subunit head. Binds mRNA in the 70S ribosome, positioning it for translation. This chain is Small ribosomal subunit protein uS3, found in Akkermansia muciniphila (strain ATCC BAA-835 / DSM 22959 / JCM 33894 / BCRC 81048 / CCUG 64013 / CIP 107961 / Muc).